An 88-amino-acid chain; its full sequence is Small ribosomal subunit protein uS15 (88 aa).

The protein belongs to the universal ribosomal protein uS15 family. As to quaternary structure, part of the 30S ribosomal subunit. Forms a bridge to the 50S subunit in the 70S ribosome, contacting the 23S rRNA.

In terms of biological role, one of the primary rRNA binding proteins, it binds directly to 16S rRNA where it helps nucleate assembly of the platform of the 30S subunit by binding and bridging several RNA helices of the 16S rRNA. Its function is as follows. Forms an intersubunit bridge (bridge B4) with the 23S rRNA of the 50S subunit in the ribosome. In Borrelia turicatae (strain 91E135), this protein is Small ribosomal subunit protein uS15.